A 355-amino-acid polypeptide reads, in one-letter code: MSKIAFTGGGTVGHVSVNLSLIPTATDKGHDAFYIGSKTGIEREMIESQLPNIEYYPISSGKLRRYLSVDNAKDVFKVLKGVIDARKVLKREKPDLLFSKGGFVSVPVVIAARSLNIPTIIHESDLTPGLANKISLKFAKKIYTTFEDTLKYLPKDKADFVGATIRQDLKEGNQSRGYQLTGFDASKKVLLVMGGSLGSKKLNQAIRENLEALLQDYQIIHLTGHGLVDSSIDAKGYVQYEFVKEELTDLLAITDTVVSRAGSNAIYEFLTLRIPMLLIPLGLDQSRGDQIDNAENFESKGYGRTIPEDQLTQVKLLEQLKEIENDRESIIKQMETYRESYTKEDLFNKILKDAL.

UDP-N-acetyl-alpha-D-glucosamine-binding residues include Arg-166, Ser-196, and Gln-290.

This sequence belongs to the glycosyltransferase 28 family. MurG subfamily.

It localises to the cell membrane. It catalyses the reaction Mur2Ac(oyl-L-Ala-gamma-D-Glu-L-Lys-D-Ala-D-Ala)-di-trans,octa-cis-undecaprenyl diphosphate + UDP-N-acetyl-alpha-D-glucosamine = beta-D-GlcNAc-(1-&gt;4)-Mur2Ac(oyl-L-Ala-gamma-D-Glu-L-Lys-D-Ala-D-Ala)-di-trans,octa-cis-undecaprenyl diphosphate + UDP + H(+). It participates in cell wall biogenesis; peptidoglycan biosynthesis. Cell wall formation. Catalyzes the transfer of a GlcNAc subunit on undecaprenyl-pyrophosphoryl-MurNAc-pentapeptide (lipid intermediate I) to form undecaprenyl-pyrophosphoryl-MurNAc-(pentapeptide)GlcNAc (lipid intermediate II). The polypeptide is UDP-N-acetylglucosamine--N-acetylmuramyl-(pentapeptide) pyrophosphoryl-undecaprenol N-acetylglucosamine transferase (Staphylococcus haemolyticus (strain JCSC1435)).